Here is a 396-residue protein sequence, read N- to C-terminus: Calcium-binding and spermatid-specific protein 1 (396 aa).

Residues 1-21 (MAEDGLPKIYSHPPTESSKTP) form a disordered region. At serine 274 the chain carries Phosphoserine. The disordered stretch occupies residues 276–296 (EKDKDNQEDTLLTDEESPEGA). Acidic residues predominate over residues 283-293 (EDTLLTDEESP). The residue at position 288 (threonine 288) is a Phosphothreonine; by CK2. 2 positions are modified to phosphoserine: serine 320 and serine 377. Positions 336-396 (EDSSTEEELS…LKEEPDEFMI (61 aa)) are disordered.

It is found in the cytoplasm. Its subcellular location is the mitochondrion inner membrane. The protein localises to the cell projection. It localises to the cilium. The protein resides in the flagellum. It is found in the cytoplasmic vesicle. Its subcellular location is the secretory vesicle. The protein localises to the acrosome. In terms of biological role, calcium-binding protein. Essential for maintaining the structural integrity of the sperm flagella. In Macaca fascicularis (Crab-eating macaque), this protein is Calcium-binding and spermatid-specific protein 1 (CABS1).